Here is a 372-residue protein sequence, read N- to C-terminus: N-methyl-L-tryptophan oxidase (372 aa).

Asp4–His34 serves as a coordination point for FAD. An S-8alpha-FAD cysteine modification is found at Cys307.

It belongs to the MSOX/MTOX family. MTOX subfamily. In terms of assembly, monomer. FAD is required as a cofactor.

It catalyses the reaction N(alpha)-methyl-L-tryptophan + O2 + H2O = L-tryptophan + formaldehyde + H2O2. In terms of biological role, catalyzes the oxidative demethylation of N-methyl-L-tryptophan. The chain is N-methyl-L-tryptophan oxidase from Salmonella heidelberg (strain SL476).